The sequence spans 294 residues: UPF0761 membrane protein YPN_0254 (294 aa).

Transmembrane regions (helical) follow at residues 44–64 (LLSLVPLITVIFALFAAFPMF), 67–87 (ISIKLKAFIFANFMPATGDII), 108–128 (GLIVTALLLIYSVDSVLNIIW), 136–156 (LVFSFAVYWMVLTLGPILVGA), 185–205 (VFPLLISWVSFWLLYSVVPTV), 212–232 (ALIGALVAALLFELGKKGFAM), and 246–266 (VLAVIPILFLWVYWSWCIVLL).

This sequence belongs to the UPF0761 family.

The protein resides in the cell inner membrane. In Yersinia pestis bv. Antiqua (strain Nepal516), this protein is UPF0761 membrane protein YPN_0254.